A 268-amino-acid polypeptide reads, in one-letter code: MAEVPELASEMMAYYSGNEDDLFFDVDGPKQMKCSFQDLDLCPLDGGIQLQISHEHYNEGFRQAVSVVVAMEKLRKMLVPCPQIFQDNDLSTLIPFIFEEEPVFLDTRNNDACVHDAPVRSLHCTLRDAQLKSLVMSGPYELKALHLQGQDLEQQVVFSMSFVQGEESNDKIPVALGLKAKNLYLSCVLKDDKPTLQLESVDPKNYPKKKMEKRFVFNKIEINNKLEFESAQFPNWYISTSQAESMPVFLGGTRGGQDITDFTMQFVS.

The propeptide occupies 1 to 116 (MAEVPELASE…TRNNDACVHD (116 aa)).

Belongs to the IL-1 family. As to quaternary structure, monomer. In its precursor form, weakly interacts with full-length MEFV; the mature cytokine does not interact at all. Interacts with integrins ITGAV:ITGBV and ITGA5:ITGB1; integrin-binding is required for IL1B signaling. Interacts with cargo receptor TMED10; the interaction is direct and is required for the secretion of IL1B mature form. Interacts with HSP90AB1; the interaction facilitates cargo translocation into the ERGIC. Interacts with HSP90B1; the interaction facilitates cargo translocation into the ERGIC.

The protein resides in the cytoplasm. It is found in the cytosol. The protein localises to the secreted. Its subcellular location is the lysosome. It localises to the extracellular exosome. Its function is as follows. Potent pro-inflammatory cytokine. Initially discovered as the major endogenous pyrogen, induces prostaglandin synthesis, neutrophil influx and activation, T-cell activation and cytokine production, B-cell activation and antibody production, and fibroblast proliferation and collagen production. Promotes Th17 differentiation of T-cells. Synergizes with IL12/interleukin-12 to induce IFNG synthesis from T-helper 1 (Th1) cells. Plays a role in angiogenesis by inducing VEGF production synergistically with TNF and IL6. Involved in transduction of inflammation downstream of pyroptosis: its mature form is specifically released in the extracellular milieu by passing through the gasdermin-D (GSDMD) pore. This is Interleukin-1 beta (IL1B) from Macaca fascicularis (Crab-eating macaque).